Here is a 216-residue protein sequence, read N- to C-terminus: Nudix hydrolase 26, chloroplastic (216 aa).

Residues 1 to 53 (MALYRPLLLHHPTSPSVTTFLRNYPSKPIKFSSLPFLHRCRKSRVSSSSARCC) constitute a chloroplast transit peptide. In terms of domain architecture, Nudix hydrolase spans 62 to 209 (GYRRNVGVCL…KKPVYKEVMS (148 aa)). A Nudix box motif is present at residues 95–116 (GGIDEGEDPRVAVMRELKEETG). Mn(2+)-binding residues include Glu-110 and Glu-114.

The protein belongs to the Nudix hydrolase family. Mg(2+) serves as cofactor. It depends on Mn(2+) as a cofactor. As to expression, expressed in roots, leaves, stems and inflorescences.

It localises to the plastid. It is found in the chloroplast. In terms of biological role, mediates the hydrolysis of some nucleoside diphosphate derivatives. Can use diadenosine 5',5'''-P(1)P(5) pentaphosphate (Ap(5)A), diadenosine 5',5'''-P(1)P(4) tetraphosphate (Ap(4)A) and diadenosine 5',5'''-P(1)P(3) triphosphate (Ap(3)A) as substrates. In Arabidopsis thaliana (Mouse-ear cress), this protein is Nudix hydrolase 26, chloroplastic (NUDT26).